Consider the following 220-residue polypeptide: Probable 26S proteasome regulatory subunit p27 (220 aa).

One can recognise a PDZ domain in the interval 119 to 196; that stretch reads ARRNNDDQAI…PVLLLREGQI (78 aa).

It belongs to the proteasome subunit p27 family. As to quaternary structure, part of a transient complex containing NAS2, RPT4 and RPT5 formed during the assembly of the 26S proteasome.

Functionally, acts as a chaperone during the assembly of the 26S proteasome, specifically of the base subcomplex of the 19S regulatory complex (RC). During the base subcomplex assembly is part of a NAS2:RPT4:RPT5 module; NAS2 is released during the further base assembly process. This is Probable 26S proteasome regulatory subunit p27 (NAS2) from Saccharomyces cerevisiae (strain ATCC 204508 / S288c) (Baker's yeast).